A 240-amino-acid chain; its full sequence is Glutamine transport ATP-binding protein GlnQ (240 aa).

The 235-residue stretch at 2 to 236 (IEFKNVSKHF…PPSQRLQEFL (235 aa)) folds into the ABC transporter domain. 34–41 (GPSGSGKS) contributes to the ATP binding site.

Belongs to the ABC transporter superfamily. In terms of assembly, heterotetramer with 2 subunits of GlnQ and 2 subunits of GlnP.

The protein localises to the cell inner membrane. Functionally, part of the binding-protein-dependent transport system for glutamine. Probably responsible for energy coupling to the transport system. The polypeptide is Glutamine transport ATP-binding protein GlnQ (glnQ) (Escherichia coli (strain K12)).